A 361-amino-acid polypeptide reads, in one-letter code: Mannose-1-phosphate guanyltransferase (361 aa).

It belongs to the transferase hexapeptide repeat family.

Its subcellular location is the cytoplasm. It carries out the reaction alpha-D-mannose 1-phosphate + GTP + H(+) = GDP-alpha-D-mannose + diphosphate. Its pathway is nucleotide-sugar biosynthesis; GDP-alpha-D-mannose biosynthesis; GDP-alpha-D-mannose from alpha-D-mannose 1-phosphate (GTP route): step 1/1. Functionally, involved in cell wall synthesis where it is required for glycosylation. Involved in cell cycle progression through cell-size checkpoint. This is Mannose-1-phosphate guanyltransferase (MPG1) from Eremothecium gossypii (strain ATCC 10895 / CBS 109.51 / FGSC 9923 / NRRL Y-1056) (Yeast).